Consider the following 368-residue polypeptide: S-adenosylmethionine:tRNA ribosyltransferase-isomerase (368 aa).

The protein belongs to the QueA family. As to quaternary structure, monomer.

The protein localises to the cytoplasm. The enzyme catalyses 7-aminomethyl-7-carbaguanosine(34) in tRNA + S-adenosyl-L-methionine = epoxyqueuosine(34) in tRNA + adenine + L-methionine + 2 H(+). The protein operates within tRNA modification; tRNA-queuosine biosynthesis. Transfers and isomerizes the ribose moiety from AdoMet to the 7-aminomethyl group of 7-deazaguanine (preQ1-tRNA) to give epoxyqueuosine (oQ-tRNA). The sequence is that of S-adenosylmethionine:tRNA ribosyltransferase-isomerase from Methylorubrum extorquens (strain CM4 / NCIMB 13688) (Methylobacterium extorquens).